The primary structure comprises 269 residues: MSKTLLDQIKQANPIITNVANSVTVDQVANVQNIIGASPIMSSDPEEAPEMVAIAQALSINIGTLSTEPIHQMKTLMAEAYRQAKPVVIDPVAVSSIHYRQKIIDELLALGTPQIIRGNAGEIAYLAGLDWQANGIDAGSGEIDLVKVAQTAAKKQQTTILLSGPTDIITDGHHTTKVANGTPLFQVHVGSGDMLTGLCAAFVAVSPDNPYQAAIDAATTFAVAGQLVAEAMPTPLPGSFYPQLLDCLFNITAADVQTHAQVTEVLTHE.

M41 contributes to the substrate binding site. ATP is bound by residues R117 and S163. G190 contributes to the substrate binding site.

Belongs to the Thz kinase family. Mg(2+) is required as a cofactor.

It carries out the reaction 5-(2-hydroxyethyl)-4-methylthiazole + ATP = 4-methyl-5-(2-phosphooxyethyl)-thiazole + ADP + H(+). It functions in the pathway cofactor biosynthesis; thiamine diphosphate biosynthesis; 4-methyl-5-(2-phosphoethyl)-thiazole from 5-(2-hydroxyethyl)-4-methylthiazole: step 1/1. In terms of biological role, catalyzes the phosphorylation of the hydroxyl group of 4-methyl-5-beta-hydroxyethylthiazole (THZ). The chain is Hydroxyethylthiazole kinase from Latilactobacillus sakei subsp. sakei (strain 23K) (Lactobacillus sakei subsp. sakei).